Here is a 506-residue protein sequence, read N- to C-terminus: MAP kinase kinase MKK2/SSP33 (506 aa).

Residues 1–69 (MASMFRPPES…TSTTSSMASN (69 aa)) are disordered. A compositionally biased stretch (polar residues) spans 26-52 (LVQNAKSTNDGQHLNRSPYSSVNESPY). Over residues 53–69 (SNNSTSATSTTSSMASN) the composition is skewed to low complexity. The Protein kinase domain occupies 214–481 (ITTLGILGEG…PRQMLKHPWI (268 aa)). ATP contacts are provided by residues 220 to 228 (LGEGAGGSV) and Lys-243. Asp-342 functions as the Proton acceptor in the catalytic mechanism.

This sequence belongs to the protein kinase superfamily. STE Ser/Thr protein kinase family. MAP kinase kinase subfamily.

The catalysed reaction is L-seryl-[protein] + ATP = O-phospho-L-seryl-[protein] + ADP + H(+). It carries out the reaction L-threonyl-[protein] + ATP = O-phospho-L-threonyl-[protein] + ADP + H(+). It catalyses the reaction L-tyrosyl-[protein] + ATP = O-phospho-L-tyrosyl-[protein] + ADP + H(+). In terms of biological role, serine/threonine protein kinase involved in a signal transduction pathway that plays a role in yeast cell morphogenesis and cell growth. This pathway seems to start by SMP3; then involves the kinase PKC1 that may act on the BCK1 kinase that then phosphorylates MKK1 and MKK2 which themselves phosphorylate the MPK1 kinase. In Saccharomyces cerevisiae (strain ATCC 204508 / S288c) (Baker's yeast), this protein is MAP kinase kinase MKK2/SSP33 (MKK2).